The primary structure comprises 727 residues: Glycerol-3-phosphate dehydrogenase, mitochondrial (727 aa).

The transit peptide at 1-42 (MAFQKAVKGTILVGGGALATVLGLSPFAHYRRKQVSLAYVEA) directs the protein to the mitochondrion. 71–99 (DILVIGGGATGCGCALDAVTRGLKTALVE) lines the FAD pocket. Tyrosine 601 bears the Phosphotyrosine mark. EF-hand domains lie at 623-658 (SDIDRYKKRFHKFDEDEKGFITIVDVQRVLESINVQ) and 659-694 (MDENTLHEILCEVDLNKNGQVELHEFLQLMSAVQKG). Ca(2+)-binding residues include aspartate 672, asparagine 674, asparagine 676, glutamine 678, and glutamate 683.

It belongs to the FAD-dependent glycerol-3-phosphate dehydrogenase family. The cofactor is FAD.

Its subcellular location is the mitochondrion inner membrane. The enzyme catalyses a quinone + sn-glycerol 3-phosphate = dihydroxyacetone phosphate + a quinol. The protein operates within polyol metabolism; glycerol degradation via glycerol kinase pathway; glycerone phosphate from sn-glycerol 3-phosphate (anaerobic route): step 1/1. Calcium-binding enhance the activity of the enzyme. Its function is as follows. Calcium-responsive mitochondrial glycerol-3-phosphate dehydrogenase which seems to be a key component of the pancreatic beta-cell glucose-sensing device. The chain is Glycerol-3-phosphate dehydrogenase, mitochondrial from Mus musculus (Mouse).